The sequence spans 216 residues: ATP-dependent Clp protease proteolytic subunit 1 (216 aa).

Ser119 functions as the Nucleophile in the catalytic mechanism. Residue His144 is part of the active site.

The protein belongs to the peptidase S14 family. In terms of assembly, fourteen ClpP subunits assemble into 2 heptameric rings which stack back to back to give a disk-like structure with a central cavity, resembling the structure of eukaryotic proteasomes.

It localises to the cytoplasm. The catalysed reaction is Hydrolysis of proteins to small peptides in the presence of ATP and magnesium. alpha-casein is the usual test substrate. In the absence of ATP, only oligopeptides shorter than five residues are hydrolyzed (such as succinyl-Leu-Tyr-|-NHMec, and Leu-Tyr-Leu-|-Tyr-Trp, in which cleavage of the -Tyr-|-Leu- and -Tyr-|-Trp bonds also occurs).. In terms of biological role, cleaves peptides in various proteins in a process that requires ATP hydrolysis. Has a chymotrypsin-like activity. Plays a major role in the degradation of misfolded proteins. The protein is ATP-dependent Clp protease proteolytic subunit 1 of Cutibacterium acnes (strain DSM 16379 / KPA171202) (Propionibacterium acnes).